The sequence spans 248 residues: Probable transcriptional regulatory protein BRADO1143 (248 aa).

It belongs to the TACO1 family.

It localises to the cytoplasm. The polypeptide is Probable transcriptional regulatory protein BRADO1143 (Bradyrhizobium sp. (strain ORS 278)).